Reading from the N-terminus, the 325-residue chain is Ribose-phosphate pyrophosphokinase 4 (325 aa).

Mg(2+)-binding residues include Asp145 and His147. A binding of phosphoribosylpyrophosphate region spans residues 228–243; sequence GRHVVIVDDLVQSGGT.

Belongs to the ribose-phosphate pyrophosphokinase family. The cofactor is Mg(2+).

The catalysed reaction is D-ribose 5-phosphate + ATP = 5-phospho-alpha-D-ribose 1-diphosphate + AMP + H(+). The sequence is that of Ribose-phosphate pyrophosphokinase 4 from Oryza sativa subsp. japonica (Rice).